Consider the following 122-residue polypeptide: Large ribosomal subunit protein uL14c (122 aa).

Belongs to the universal ribosomal protein uL14 family. In terms of assembly, part of the 50S ribosomal subunit.

Its subcellular location is the plastid. It is found in the chloroplast. Functionally, binds to 23S rRNA. The protein is Large ribosomal subunit protein uL14c (rpl14) of Bigelowiella natans (Pedinomonas minutissima).